Here is a 465-residue protein sequence, read N- to C-terminus: Na(+)-translocating NADH-quinone reductase subunit A (465 aa).

Belongs to the NqrA family. Composed of six subunits; NqrA, NqrB, NqrC, NqrD, NqrE and NqrF.

The enzyme catalyses a ubiquinone + n Na(+)(in) + NADH + H(+) = a ubiquinol + n Na(+)(out) + NAD(+). Its function is as follows. NQR complex catalyzes the reduction of ubiquinone-1 to ubiquinol by two successive reactions, coupled with the transport of Na(+) ions from the cytoplasm to the periplasm. NqrA to NqrE are probably involved in the second step, the conversion of ubisemiquinone to ubiquinol. This chain is Na(+)-translocating NADH-quinone reductase subunit A, found in Chlamydia trachomatis serovar L2b (strain UCH-1/proctitis).